A 473-amino-acid polypeptide reads, in one-letter code: MEIFHISAECYPMAKVGGLADVVGALPKYQKNAGNDVRVVVPAYDTKFKKENNFECVHWGTVKLGNFNFPFSVLKESSDKLGYELYLIEIKELFNRPNVYGYEDDIERFLSFQIAVLDWIIARNKVPDIINCHDHHTGLIPFLLQFAYKYENLKDVKTVITIHNGLYQGWFGFDKLYYLPEFDLKHIGFLEWNNCINSLAVGVKCANAVTTVSPSYLNEINYSANGLESLFNSVRNKSKGILNGIDIEIWNPLKDQMIAANYSIENFEIGKQKNKEKLCEQFELDPSKPLFSFIGRLFEEKGGDLLPQASALALSEHFEEINILILGSGNAEIESQLTQLRNDYKGNYNVFIGYNEELAHLIYAGSDYILMPSRVEPCGLNQMYAMRYGTIPIVRRTGGLRDTVIDFGDDGNGICHDQASVGDICYSINRAVKLYDDKISFNTVLRRGMAADHSWERVCQEYIEIYNLIIQQK.

Lys-15 is a binding site for ADP-alpha-D-glucose.

Belongs to the glycosyltransferase 1 family. Bacterial/plant glycogen synthase subfamily.

It catalyses the reaction [(1-&gt;4)-alpha-D-glucosyl](n) + ADP-alpha-D-glucose = [(1-&gt;4)-alpha-D-glucosyl](n+1) + ADP + H(+). It functions in the pathway glycan biosynthesis; glycogen biosynthesis. In terms of biological role, synthesizes alpha-1,4-glucan chains using ADP-glucose. The polypeptide is Glycogen synthase (Flavobacterium johnsoniae (strain ATCC 17061 / DSM 2064 / JCM 8514 / BCRC 14874 / CCUG 350202 / NBRC 14942 / NCIMB 11054 / UW101) (Cytophaga johnsonae)).